A 653-amino-acid chain; its full sequence is Fidgetin-like protein 2 (653 aa).

Disordered regions lie at residues 1–36, 86–129, and 216–240; these read MHWT…ELPP, ASFL…SGAL, and YGAL…APTP. Over residues 10–27 the composition is skewed to polar residues; that stretch reads PLNQWPEQHLDVSSTTPS. Residues 97-107 are compositionally biased toward pro residues; sequence EPWPGPEPPYP. A compositionally biased stretch (gly residues) spans 119-129; it reads KSGGGGGSGAL. Pro residues predominate over residues 219–240; it reads LPPPPGPPPAPYLTPGLPAPTP. Residues Ala395 and 435 to 440 each bind ATP; that span reads GAGKAL.

This sequence belongs to the AAA ATPase family. It depends on Mg(2+) as a cofactor.

Its subcellular location is the cytoplasm. The protein localises to the cell cortex. The catalysed reaction is ATP + H2O = ADP + phosphate + H(+). Microtubule-severing enzyme that negatively regulates cell migration and wound healing. In migrating cells, targets dynamic microtubules (MTs) at the leading edge and severs them, thereby suppressing motility. Microtubule severing releases ARHGEF2 which activates RHOA, which in turn regulates focal ahesion turnover via focal adhesion kinase, as opposed to F-actin polymerization, to suppress cell motility. Negative regulator of axon regeneration that suppresses axonal growth by selectively severing dynamic MTs in the distal axon shaft and growth cone. Contributes to proper cell branching during endothelial and neuronal development. In Homo sapiens (Human), this protein is Fidgetin-like protein 2.